The chain runs to 105 residues: UPF0145 protein AHA_2580 (105 aa).

This sequence belongs to the UPF0145 family.

This is UPF0145 protein AHA_2580 from Aeromonas hydrophila subsp. hydrophila (strain ATCC 7966 / DSM 30187 / BCRC 13018 / CCUG 14551 / JCM 1027 / KCTC 2358 / NCIMB 9240 / NCTC 8049).